A 707-amino-acid polypeptide reads, in one-letter code: Choline transporter-like protein 4 (707 aa).

At 1–33 the chain is on the cytoplasmic side; that stretch reads MGGKQDQDKEAYGKPAKYDPSFRGPIRNRSCTD. Residues 34–54 traverse the membrane as a helical segment; that stretch reads IICCVLFFLFILGYIAVGILA. Topologically, residues 55–227 are extracellular; that stretch reads WVYGDPKQVL…KIFEDFAQSW (173 aa). N68, N185, and N196 each carry an N-linked (GlcNAc...) asparagine glycan. A helical transmembrane segment spans residues 228–248; the sequence is YWILIALGLALVLSLLFILLL. Residues 249 to 250 are Cytoplasmic-facing; that stretch reads RL. A helical membrane pass occupies residues 251 to 271; that stretch reads VAGPLVFVLIIGVLGVLAYGI. At 272–307 the chain is on the extracellular side; sequence YHCWEEYRVLRDKGASISQLGFTTNLSAYRNVQETW. N296 carries an N-linked (GlcNAc...) asparagine glycan. Residues 308–328 traverse the membrane as a helical segment; that stretch reads LAALIILAVLEGVLLLMLIFL. Topologically, residues 329–356 are cytoplasmic; it reads RQRICIAIALLKEASRAVGYIMSTMFYP. Residues 357–377 traverse the membrane as a helical segment; that stretch reads LVTFALLLVCIAYWAIIALFL. Topologically, residues 378-452 are extracellular; the sequence is ATSGQPQYVF…AVLGLFWTIN (75 aa). 3 N-linked (GlcNAc...) asparagine glycosylation sites follow: N391, N403, and N413. The helical transmembrane segment at 453-473 threads the bilayer; the sequence is WVLALGQCVLAGAFASFYWAF. The Cytoplasmic segment spans residues 474 to 498; sequence HKPRDIPTFPLGSAFLRTLRYHTGS. Residues 499–519 traverse the membrane as a helical segment; sequence LAFGALILTLVQIARVILEYI. Residues 520–557 are Extracellular-facing; the sequence is DHKLRGAQNPLTRCILCCFKCCLWCLEKFIKFLNRNAY. A helical membrane pass occupies residues 558-578; it reads IMIAIYGKNFCVSAKNAFMLL. The Cytoplasmic portion of the chain corresponds to 579–594; that stretch reads MRNIVRVVVLDKVTDL. The chain crosses the membrane as a helical span at residues 595-615; the sequence is LLFFGKLLVVGGVGVLSFFFF. Topologically, residues 616–635 are extracellular; sequence TGRIPSLGKTFENPQLNYYW. Residues 636 to 656 form a helical membrane-spanning segment; sequence LPIMVSILGAYLIASGFFSVF. Residues 657–707 lie on the Cytoplasmic side of the membrane; the sequence is GMCVDTLFLCFLEDLERNDGSADRPYYMSKSLLKILGKKNKGTPGDKKRKK.

Belongs to the CTL (choline transporter-like) family. In terms of processing, N-glycosylated; N-glycosylation of Asn-68 and Asn-391 is required for a proper thiamine pyrophosphate uptake.

Its subcellular location is the membrane. The protein localises to the apical cell membrane. The enzyme catalyses choline(out) + n H(+)(in) = choline(in) + n H(+)(out). It catalyses the reaction thiamine diphosphate(out) = thiamine diphosphate(in). Choline transporter that plays a role in the choline-acetylcholine system and is required to the efferent innervation of hair cells in the olivocochlear bundle for the maintenance of physiological function of outer hair cells and the protection of hair cells from acoustic injury. Also described as a thiamine pyrophosphate transporter in colon, may mediate the absorption of microbiota-generated thiamine pyrophosphate and contribute to host thiamine (vitamin B1) homeostasis. The protein is Choline transporter-like protein 4 of Bos taurus (Bovine).